We begin with the raw amino-acid sequence, 367 residues long: Germination protease (367 aa).

The propeptide occupies 1 to 15; sequence MKEPLDLSKYSIRTD.

It belongs to the peptidase A25 family. In terms of assembly, homotetramer. In terms of processing, autoproteolytically processed. The inactive tetrameric zymogen termed p46 autoprocesses to a smaller form termed p41, which is active only during spore germination.

The catalysed reaction is Endopeptidase action with P4 Glu or Asp, P1 preferably Glu &gt; Asp, P1' hydrophobic and P2' Ala.. Functionally, initiates the rapid degradation of small, acid-soluble proteins during spore germination. The protein is Germination protease of Bacillus cereus (strain ATCC 14579 / DSM 31 / CCUG 7414 / JCM 2152 / NBRC 15305 / NCIMB 9373 / NCTC 2599 / NRRL B-3711).